A 258-amino-acid chain; its full sequence is Glutamate racemase (258 aa).

Residues 11–12 and 43–44 each bind substrate; these read DS and YG. C74 serves as the catalytic Proton donor/acceptor. Residue 75–76 coordinates substrate; the sequence is NT. The active-site Proton donor/acceptor is C187. 188-189 contributes to the substrate binding site; the sequence is TH.

Belongs to the aspartate/glutamate racemases family.

The catalysed reaction is L-glutamate = D-glutamate. It participates in cell wall biogenesis; peptidoglycan biosynthesis. Provides the (R)-glutamate required for cell wall biosynthesis. The polypeptide is Glutamate racemase (Bifidobacterium animalis subsp. lactis (strain AD011)).